Here is a 378-residue protein sequence, read N- to C-terminus: Mannitol-1-phosphate 5-dehydrogenase (378 aa).

4–15 contributes to the NAD(+) binding site; it reads SVHFGAGNIGRG.

Belongs to the mannitol dehydrogenase family.

It carries out the reaction D-mannitol 1-phosphate + NAD(+) = beta-D-fructose 6-phosphate + NADH + H(+). The chain is Mannitol-1-phosphate 5-dehydrogenase from Streptococcus pneumoniae (strain CGSP14).